Here is a 224-residue protein sequence, read N- to C-terminus: MQLLKQLFKKKFVKEEHDKKTGQEGMTLLEVIIVLGIMGVVSAGVVTLAQRAIDSQNMTKAAQNLNSVQIAMTQTYRSLGNYPATANANAATQLANGLVSLGKVSADEAKNPFTGTAMGIFSFPRNSAANKAFAITVGGLTQAQCKTLVTSVGDMFPFINVKEGAFAAVADLGDFETSVADAATGAGVIKSIAPGSANLNLTNITHVEKLCTGTAPFTVAFGNS.

The propeptide at 1-25 is atypical leader sequence; sequence MQLLKQLFKKKFVKEEHDKKTGQEG. Methionine 26 carries the post-translational modification N-methylmethionine. The chain crosses the membrane as a helical span at residues 26–46; the sequence is MTLLEVIIVLGIMGVVSAGVV. Residues cysteine 145 and cysteine 211 are joined by a disulfide bond.

Its subcellular location is the fimbrium. It localises to the membrane. Functionally, major component of the toxin co-regulated pilus (tcp) which is a type IV pilus essential for bacterial aggregation and subsequent colonization in the host small intestine. The polypeptide is Toxin coregulated pilin (tcpA) (Vibrio cholerae serotype O1 (strain ATCC 39315 / El Tor Inaba N16961)).